Here is a 105-residue protein sequence, read N- to C-terminus: Met repressor (105 aa).

The protein belongs to the MetJ family. As to quaternary structure, homodimer.

The protein resides in the cytoplasm. Its function is as follows. This regulatory protein, when combined with SAM (S-adenosylmethionine) represses the expression of the methionine regulon and of enzymes involved in SAM synthesis. The protein is Met repressor of Vibrio vulnificus (strain CMCP6).